Reading from the N-terminus, the 249-residue chain is UPF0696 protein C11orf68 homolog (249 aa).

This sequence belongs to the UPF0696 family.

This is UPF0696 protein C11orf68 homolog from Danio rerio (Zebrafish).